A 465-amino-acid chain; its full sequence is Dihydrolipoyl dehydrogenase (465 aa).

FAD-binding positions include 34-42 (EKREAGGTC), Lys-51, and Gly-114. Cys-42 and Cys-47 form a disulfide bridge. Residues 180 to 184 (GGGVI), Glu-203, Val-237, and 264 to 267 (SIGR) each bind NAD(+). 2 residues coordinate FAD: Asp-307 and Ala-315. The active-site Proton acceptor is the His-439.

Belongs to the class-I pyridine nucleotide-disulfide oxidoreductase family. The cofactor is FAD.

The protein localises to the cytoplasm. The enzyme catalyses N(6)-[(R)-dihydrolipoyl]-L-lysyl-[protein] + NAD(+) = N(6)-[(R)-lipoyl]-L-lysyl-[protein] + NADH + H(+). The branched-chain alpha-keto dehydrogenase complex catalyzes the overall conversion of alpha-keto acids to acyl-CoA and CO(2). It contains multiple copies of 3 enzymatic components: branched-chain alpha-keto acid decarboxylase (E1), lipoamide acyltransferase (E2) and lipoamide dehydrogenase (E3). This is Dihydrolipoyl dehydrogenase (lpdA) from Chlamydia trachomatis serovar D (strain ATCC VR-885 / DSM 19411 / UW-3/Cx).